A 358-amino-acid polypeptide reads, in one-letter code: Type II restriction enzyme CviJI (358 aa).

Mg(2+) is required as a cofactor.

It carries out the reaction Endonucleolytic cleavage of DNA to give specific double-stranded fragments with terminal 5'-phosphates.. Its function is as follows. A P subtype restriction enzyme that recognizes the double-stranded sequence 5'-RGCY-3' and cleaves after G-2. In the presence of ATP, there is a relaxation of its specificity and it can cleave 5'-RGCN-3' and 5'-YGCY-3', but not 5'-YGCR-3' (R.CviJI* activity). This Paramecium bursaria Chlorella virus IL3A (PBCV-IL3A) protein is Type II restriction enzyme CviJI.